Here is a 99-residue protein sequence, read N- to C-terminus: Integration host factor subunit alpha (99 aa).

Belongs to the bacterial histone-like protein family. Heterodimer of an alpha and a beta chain.

This protein is one of the two subunits of integration host factor, a specific DNA-binding protein that functions in genetic recombination as well as in transcriptional and translational control. This chain is Integration host factor subunit alpha, found in Alteromonas mediterranea (strain DSM 17117 / CIP 110805 / LMG 28347 / Deep ecotype).